A 982-amino-acid chain; its full sequence is MPHSFPDYSFTCPFCKNNCKLSFAQCPAFCPFCGKSQKNESTGLPIQSDFYQIIKSIGKGGMGEVFLAYDPCYERQIAIKKIRSDLLEHPQIKKRFLKEAHMTSQLTHPAIIPIYTIRSDADTAYYTMPFVEGDTLKQIIRKTKLQEKNGETLDYLGGSILALMRVFITICQAVAYAHSKGVLHRDLKPENIIIGKYGEVLILDWGLAKFIDQSPEEELLASFPESLTKQKDITKIGKVVGTVAYMAPERALGQPATIQTDIYSLGVILYQLLTLKSPFKRGTLDEFRKNMSREEWQDPVTAAPYREVPRMLASFTEKCLSLDLQNRYQSVEELIRDIENYLEGRSEWFCIANLNTKEKNDWEFQENVLIAEHVAITRMTDDAEWVSLMISKQSFTGNTKIEADVCLGEQGHGIGFLLSVPEASAREHLIEGYCLWLGSDFSKTTKLLRSNVEVVHAPDIFLKRQQTYHVRIEKVDKSIHVYINDNLQFSYIAHIPLIGTHVGLLSRDADFEISPLEIYVGNLNINVNCLAVPDAFLAHRDYNQALSEYRRIAYSFPDRTEGREALFRAGLTFLEQAKTAENKMPLLEEALNEFEKLHGTPSAPLEYLGKALAYESINDSEEEIKCYELAYRRYPNHPILPMLQEQIISRLHEVSRMQRITTYRFTLLTVRHLPLNKIDTHTKRLFNSLQKHWEVLPFIEYKSPSPLTTLSTRFATPLAFWLAKPFILGEILDDLIQSPPFPIEEVNNALLCLVELGSWEYAQEKLNTIQTYLNLPQNPKWLDLKAFIACHYQTLEDVYKDFFFQIPSTNADHLHAVLYFMDQCLDQLNTSLIYTLARQFEHAELSFEDRLRLNCRRVWAYLLDKNWQDAGNLLYTYSVETLNKDSSLLHFLYGCWLQVTEGAEIANVHFAGVNPVMFPRTWTLGARFLTNNLSKDSYEKAFMWEKRQLCKQLILYYHCVGNETKRIHFQKLYQEQFIHAEL.

A Protein kinase domain is found at 51–342; it reads YQIIKSIGKG…ELIRDIENYL (292 aa). Residues 57–65 and lysine 80 contribute to the ATP site; that span reads IGKGGMGEV. Aspartate 186 serves as the catalytic Proton acceptor.

It belongs to the protein kinase superfamily. Ser/Thr protein kinase family. Autophosphorylated on serine and threonine residues.

The enzyme catalyses L-seryl-[protein] + ATP = O-phospho-L-seryl-[protein] + ADP + H(+). The catalysed reaction is L-threonyl-[protein] + ATP = O-phospho-L-threonyl-[protein] + ADP + H(+). Together with the serine/threonine kinase Pkn1, may play a role in the specific interactions with host proteins during intracellular growth. The protein is Serine/threonine-protein kinase PknD of Protochlamydia amoebophila (strain UWE25).